A 61-amino-acid polypeptide reads, in one-letter code: Small ribosomal subunit protein uS14 (61 aa).

The Zn(2+) site is built by Cys-24, Cys-27, Cys-40, and Cys-43.

It belongs to the universal ribosomal protein uS14 family. Zinc-binding uS14 subfamily. As to quaternary structure, part of the 30S ribosomal subunit. Contacts proteins S3 and S10. The cofactor is Zn(2+).

Binds 16S rRNA, required for the assembly of 30S particles and may also be responsible for determining the conformation of the 16S rRNA at the A site. In Thermoanaerobacter sp. (strain X514), this protein is Small ribosomal subunit protein uS14.